Consider the following 189-residue polypeptide: Large ribosomal subunit protein eL18 (189 aa).

The protein belongs to the eukaryotic ribosomal protein eL18 family.

It localises to the cytoplasm. In Aedes aegypti (Yellowfever mosquito), this protein is Large ribosomal subunit protein eL18 (RpL18).